A 310-amino-acid chain; its full sequence is Glycine--tRNA ligase alpha subunit (310 aa).

Belongs to the class-II aminoacyl-tRNA synthetase family. Tetramer of two alpha and two beta subunits.

Its subcellular location is the cytoplasm. The catalysed reaction is tRNA(Gly) + glycine + ATP = glycyl-tRNA(Gly) + AMP + diphosphate. This is Glycine--tRNA ligase alpha subunit from Aliivibrio salmonicida (strain LFI1238) (Vibrio salmonicida (strain LFI1238)).